The chain runs to 293 residues: Probable porphobilinogen deaminase (293 aa).

Cysteine 233 is subject to S-(dipyrrolylmethanemethyl)cysteine.

This sequence belongs to the HMBS family. Requires dipyrromethane as cofactor.

The catalysed reaction is 4 porphobilinogen + H2O = hydroxymethylbilane + 4 NH4(+). It participates in porphyrin-containing compound metabolism; protoporphyrin-IX biosynthesis; coproporphyrinogen-III from 5-aminolevulinate: step 2/4. Functionally, tetrapolymerization of the monopyrrole PBG into the hydroxymethylbilane pre-uroporphyrinogen in several discrete steps. The chain is Probable porphobilinogen deaminase from Saccharolobus islandicus (strain Y.N.15.51 / Yellowstone #2) (Sulfolobus islandicus).